Reading from the N-terminus, the 348-residue chain is Phospho-2-dehydro-3-deoxyheptonate aldolase, Trp-sensitive (348 aa).

Belongs to the class-I DAHP synthase family.

The enzyme catalyses D-erythrose 4-phosphate + phosphoenolpyruvate + H2O = 7-phospho-2-dehydro-3-deoxy-D-arabino-heptonate + phosphate. The protein operates within metabolic intermediate biosynthesis; chorismate biosynthesis; chorismate from D-erythrose 4-phosphate and phosphoenolpyruvate: step 1/7. Its function is as follows. Stereospecific condensation of phosphoenolpyruvate (PEP) and D-erythrose-4-phosphate (E4P) giving rise to 3-deoxy-D-arabino-heptulosonate-7-phosphate (DAHP). This is Phospho-2-dehydro-3-deoxyheptonate aldolase, Trp-sensitive (aroH) from Salmonella typhimurium (strain LT2 / SGSC1412 / ATCC 700720).